We begin with the raw amino-acid sequence, 132 residues long: ATP synthase epsilon chain (132 aa).

Belongs to the ATPase epsilon chain family. In terms of assembly, F-type ATPases have 2 components, CF(1) - the catalytic core - and CF(0) - the membrane proton channel. CF(1) has five subunits: alpha(3), beta(3), gamma(1), delta(1), epsilon(1). CF(0) has three main subunits: a, b and c.

It localises to the cell membrane. Its function is as follows. Produces ATP from ADP in the presence of a proton gradient across the membrane. This chain is ATP synthase epsilon chain (atpC), found in Geobacillus stearothermophilus (Bacillus stearothermophilus).